A 548-amino-acid polypeptide reads, in one-letter code: SH2/SH3 adapter protein dreadlocks (548 aa).

3 disordered regions span residues 12–37 (IPDS…QHQN), 57–92 (QVPV…TASS), and 113–146 (GSGS…MKHG). The span at 20–37 (QQYPQQQQHPPQLPQHQN) shows a compositional bias: low complexity. Residues 113–122 (GSGSANGSGS) are compositionally biased toward gly residues. Residues 123–135 (GNSSSGSAAGNAG) show a composition bias toward low complexity. An SH3 1 domain is found at 150 to 209 (DDVCYVVAKYDYAAQGAQELDLRKNERYLLLDDSKHWWRVQNSRNQSGYVPSNYVKKEKP). Residues 219 to 247 (VKKGSGSKTLPNCSPSRQVESPTMSRRLP) are disordered. A compositionally biased stretch (polar residues) spans 227 to 242 (TLPNCSPSRQVESPTM). 2 SH3 domains span residues 252-311 (EAIG…EDCD) and 324-386 (NVLD…ELND). Residues 398–442 (SAGNGNGGGSNGGAGGGGGNDSMERRNEGNKPAAQSSGQPIERPN) are disordered. Positions 401 to 417 (NGNGGGSNGGAGGGGGN) are enriched in gly residues. Positions 448-542 (WYYGAITRSQ…GEKLYLVRSL (95 aa)) constitute an SH2 domain.

In terms of assembly, interacts (via SH2 and SH3 domains) with Dscam1 (via cytoplasmic domain); the interaction is direct and requires Dscam1 to be phosphorylated. Interacts (via SH2 and SH3 domains) with InR/Insulin-like receptor (via C-terminal cytoplasmic region); the interaction requires InR kinase activity, probably for autophosphorylation stimulated by insulin signaling. Interacts with Ptp61F (via C-terminus); this interaction is independent of insulin stimulation. Interacts (via SH3 domain 2) with Pak (via N-terminal PXXP motif). Post-translationally, phosphorylated by Src42A and possibly by other tyrosine kinases. Constitutively dephosphorylated by its binding partner Ptp61F.

The protein resides in the perikaryon. It localises to the cell projection. Its subcellular location is the axon. The protein localises to the growth cone. Functionally, adapter protein that links cell surface receptor tyrosine phosphorylation to downstream signaling pathways and effectors, many of which are involved in regulation of the actin cytoskeleton. Recruited by Dscam1/Down syndrome cell adhesion molecule homolog and InR/insulin-like receptor. Recruits Pak to membranes, probably when dock/dreadlocks is associated with activated receptors. Required for guidance and targeting of photoreceptor (R cell) axon projections but not for axon outgrowth, differentiation or target induction in the developing eye. As part of a signaling pathway that involves the lbm/late bloomer protein, involved in synapse formation of the RP3 motorneuron at the muscle 7/6 cleft, probably by stimulating axon defasciculation from other SNb neurons. This is SH2/SH3 adapter protein dreadlocks from Drosophila melanogaster (Fruit fly).